The following is a 430-amino-acid chain: Lipoyl synthase, chloroplastic (430 aa).

Residues 1-16 (MRSLATLHQSPASCSR) show a composition bias toward polar residues. Residues 1–40 (MRSLATLHQSPASCSRSAPVAPCPARRANSSRRVARQGPR) constitute a chloroplast transit peptide. Disordered regions lie at residues 1-55 (MRSL…SEDV) and 85-119 (HLRS…SLGA). Low complexity predominate over residues 91 to 119 (KSAAPVSPFAAPSPGSPSASSMLGPSLGA). [4Fe-4S] cluster contacts are provided by Cys-155, Cys-160, Cys-166, Cys-183, Cys-187, Cys-190, and Ser-397. The Radical SAM core domain maps to 166 to 386 (CWNGELATAT…KFGQEEIGFR (221 aa)).

It belongs to the radical SAM superfamily. Lipoyl synthase family. It depends on [4Fe-4S] cluster as a cofactor.

Its subcellular location is the plastid. It localises to the chloroplast. The enzyme catalyses [[Fe-S] cluster scaffold protein carrying a second [4Fe-4S](2+) cluster] + N(6)-octanoyl-L-lysyl-[protein] + 2 oxidized [2Fe-2S]-[ferredoxin] + 2 S-adenosyl-L-methionine + 4 H(+) = [[Fe-S] cluster scaffold protein] + N(6)-[(R)-dihydrolipoyl]-L-lysyl-[protein] + 4 Fe(3+) + 2 hydrogen sulfide + 2 5'-deoxyadenosine + 2 L-methionine + 2 reduced [2Fe-2S]-[ferredoxin]. It functions in the pathway protein modification; protein lipoylation via endogenous pathway; protein N(6)-(lipoyl)lysine from octanoyl-[acyl-carrier-protein]: step 2/2. Catalyzes the radical-mediated insertion of two sulfur atoms into the C-6 and C-8 positions of the octanoyl moiety bound to the lipoyl domains of lipoate-dependent enzymes, thereby converting the octanoylated domains into lipoylated derivatives. The polypeptide is Lipoyl synthase, chloroplastic (Chlamydomonas reinhardtii (Chlamydomonas smithii)).